Here is a 429-residue protein sequence, read N- to C-terminus: Enolase (429 aa).

Residue Q162 coordinates (2R)-2-phosphoglycerate. The active-site Proton donor is E204. Mg(2+) contacts are provided by D241, E283, and D310. Residues K335, R364, S365, and K386 each contribute to the (2R)-2-phosphoglycerate site. K335 functions as the Proton acceptor in the catalytic mechanism.

This sequence belongs to the enolase family. The cofactor is Mg(2+).

The protein localises to the cytoplasm. The protein resides in the secreted. Its subcellular location is the cell surface. The catalysed reaction is (2R)-2-phosphoglycerate = phosphoenolpyruvate + H2O. It functions in the pathway carbohydrate degradation; glycolysis; pyruvate from D-glyceraldehyde 3-phosphate: step 4/5. Catalyzes the reversible conversion of 2-phosphoglycerate (2-PG) into phosphoenolpyruvate (PEP). It is essential for the degradation of carbohydrates via glycolysis. The polypeptide is Enolase (Mycobacterium leprae (strain TN)).